The sequence spans 158 residues: D-aminoacyl-tRNA deacylase (158 aa).

The Gly-cisPro motif, important for rejection of L-amino acids signature appears at 138–139; that stretch reads GP.

The protein belongs to the DTD family. In terms of assembly, homodimer.

The protein localises to the cytoplasm. The enzyme catalyses glycyl-tRNA(Ala) + H2O = tRNA(Ala) + glycine + H(+). The catalysed reaction is a D-aminoacyl-tRNA + H2O = a tRNA + a D-alpha-amino acid + H(+). In terms of biological role, an aminoacyl-tRNA editing enzyme that deacylates mischarged D-aminoacyl-tRNAs. Hydrolyzes correctly charged, achiral, glycyl-tRNA(Gly). Deacylates mischarged endogenous and E.coli glycyl-tRNA(Ala), protecting cells against glycine mischarging by AlaRS. Acts via tRNA-based rather than protein-based catalysis; rejects L-amino acids rather than detecting D-amino acids in the active site. By recycling D-aminoacyl-tRNA to D-amino acids and free tRNA molecules, this enzyme counteracts the toxicity associated with the formation of D-aminoacyl-tRNA entities in vivo and helps enforce protein L-homochirality. In Drosophila melanogaster (Fruit fly), this protein is D-aminoacyl-tRNA deacylase.